The sequence spans 165 residues: Cysteine-rich hydrophobic domain-containing protein 2 (165 aa).

Positions 1 to 26 (MADFDEIYEEEEDEERALEEQLLKYS) form a coiled coil. The CHIC motif (Cys-rich) signature appears at 88–106 (CGCLCCCCTLGCSMWPVIC).

Belongs to the CHIC family. Palmitoylation in the CHIC motif is required for membrane association.

Its subcellular location is the membrane. It is found in the golgi apparatus. The protein is Cysteine-rich hydrophobic domain-containing protein 2 (Chic2) of Mus musculus (Mouse).